Reading from the N-terminus, the 497-residue chain is MPTDSKMAKFLQSYGYDLILGSVAAIYVVMAPYTKVEESFNVQSMHDILYHRHHLDSYDHLEFPGVVPRTFIGAFIVSVFASPVVSIISCLGFPKVYSLVAARLVLGCIILSTLRFFRIQIKKKFGNQVETFFVLFTSLQFHFLFYCTRPLPNILALGLVNLAYGNWLKGNFYPALSFLIFATVIFRCDTMLLLGPIGLELLLTKSISFWKALKYCVGTALLAVGLTIFVDSIMWKKFVWPEFEVFWFNSILNRSSDWGTHSIHWYFTSALPRSLLVAYPLSLLGTLVDRRVPFFIVPVLSFVILYSKLPHKELRFIISSVPMFNLSAAVAASRIYNNRKKTIWKLVNMVMLAFFAISAGCTVVTFMASYYNYPSGYALKRLHQIGHPANVAGEEWVHIDTFGAMNGISRFCEDDFPWRYSKEEEIVVEELRNRNFTYLVNEHSSVDGYKCLFYEEGFERLELRRGFPPIVLVKKAKVYLHREMKKEDPFHKKWPGC.

The next 7 helical transmembrane spans lie at 10–30 (FLQSYGYDLILGSVAAIYVVM), 71–91 (FIGAFIVSVFASPVVSIISCL), 92–112 (GFPKVYSLVAARLVLGCIILS), 125–145 (FGNQVETFFVLFTSLQFHFLF), 154–174 (ILALGLVNLAYGNWLKGNFYP), 178–198 (FLIFATVIFRCDTMLLLGPIG), and 215–235 (YCVGTALLAVGLTIFVDSIMW). Asparagine 253 is a glycosylation site (N-linked (GlcNAc...) asparagine). A run of 4 helical transmembrane segments spans residues 263–285 (IHWYFTSALPRSLLVAYPLSLLG), 292–312 (VPFFIVPVLSFVILYSKLPHK), 316–336 (FIISSVPMFNLSAAVAASRIY), and 346–366 (LVNMVMLAFFAISAGCTVVTF). Asparagine 435 carries N-linked (GlcNAc...) asparagine glycosylation.

It belongs to the glycosyltransferase 22 family.

It is found in the endoplasmic reticulum membrane. The enzyme catalyses an alpha-D-Man-(1-&gt;2)-alpha-D-Man-(1-&gt;2)-alpha-D-Man-(1-&gt;3)-[alpha-D-Man-(1-&gt;2)-alpha-D-Man-(1-&gt;3)-alpha-D-Man-(1-&gt;6)]-beta-D-Man-(1-&gt;4)-beta-D-GlcNAc-(1-&gt;4)-alpha-D-GlcNAc-diphospho-di-trans,poly-cis-dolichol + a di-trans,poly-cis-dolichyl beta-D-mannosyl phosphate = an alpha-D-Man-(1-&gt;2)-alpha-D-Man-(1-&gt;2)-alpha-D-Man-(1-&gt;3)-[alpha-D-Man-(1-&gt;2)-alpha-D-Man-(1-&gt;3)-[alpha-D-Man-(1-&gt;6)]-alpha-D-Man-(1-&gt;6)]-beta-D-Man-(1-&gt;4)-beta-D-GlcNAc-(1-&gt;4)-alpha-D-GlcNAc-diphospho-di-trans,poly-cis-dolichol + a di-trans,poly-cis-dolichyl phosphate + H(+). It functions in the pathway protein modification; protein glycosylation. Mannosyltransferase that operates in the biosynthetic pathway of dolichol-linked oligosaccharides, the glycan precursors employed in protein asparagine (N)-glycosylation. The assembly of dolichol-linked oligosaccharides begins on the cytosolic side of the endoplasmic reticulum membrane and finishes in its lumen. The sequential addition of sugars to dolichol pyrophosphate produces dolichol-linked oligosaccharides containing fourteen sugars, including two GlcNAcs, nine mannoses and three glucoses. Once assembled, the oligosaccharide is transferred from the lipid to nascent proteins by oligosaccharyltransferases. In the lumen of the endoplasmic reticulum, adds the eighth mannose residue in an alpha-1,6 linkage onto Man(7)GlcNAc(2)-PP-dolichol to produce Man(8)GlcNAc(2)-PP-dolichol. The sequence is that of Dol-P-Man:Man(7)GlcNAc(2)-PP-Dol alpha-1,6-mannosyltransferase (ALG12) from Arabidopsis thaliana (Mouse-ear cress).